Here is a 173-residue protein sequence, read N- to C-terminus: Alpha-crystallin A chain (173 aa).

Methionine 1 carries the N-acetylmethionine modification. The interval 1–63 is required for complex formation with BFSP1 and BFSP2; sequence MDIAIQHPWF…RSVLDSGISE (63 aa). A Deamidated glutamine; partial modification is found at glutamine 6. Residue serine 45 is modified to Phosphoserine. Glutamine 50 bears the Deamidated glutamine; partial mark. Positions 52–162 constitute a sHSP domain; the sequence is LFRSVLDSGI…GHSERAIPVS (111 aa). Position 70 is an N6-acetyllysine (lysine 70). Glutamine 90 is modified (deamidated glutamine; partial). Lysine 99 is modified (N6-acetyllysine). Residue histidine 100 participates in Zn(2+) binding. Deamidated asparagine; partial is present on asparagine 101. Zn(2+) is bound by residues glutamate 102 and histidine 107. Serine 122 is modified (phosphoserine). The residue at position 123 (asparagine 123) is a Deamidated asparagine; partial. Positions 144-173 are disordered; that stretch reads PKVTSGMDAGHSERAIPVSREEKPSSAPSS. Basic and acidic residues predominate over residues 153-167; it reads GHSERAIPVSREEKP. Histidine 154 is a Zn(2+) binding site. The O-linked (GlcNAc) serine glycan is linked to serine 162.

The protein belongs to the small heat shock protein (HSP20) family. As to quaternary structure, heteromer composed of three CRYAA and one CRYAB subunits. Inter-subunit bridging via zinc ions enhances stability, which is crucial as there is no protein turn over in the lens. Can also form homodimers and homotetramers (dimers of dimers) which serve as the building blocks of homooligomers. Within homooligomers, the zinc-binding motif is created from residues of 3 different molecules. His-100 and Glu-102 from one molecule are ligands of the zinc ion, and His-107 and His-154 residues from additional molecules complete the site with tetrahedral coordination geometry. Part of a complex required for lens intermediate filament formation composed of BFSP1, BFSP2 and CRYAA. Post-translationally, acetylation at Lys-70 may increase chaperone activity. Undergoes age-dependent proteolytical cleavage at the C-terminus.

It localises to the cytoplasm. The protein localises to the nucleus. In terms of biological role, contributes to the transparency and refractive index of the lens. Acts as a chaperone, preventing aggregation of various proteins under a wide range of stress conditions. Required for the correct formation of lens intermediate filaments as part of a complex composed of BFSP1, BFSP2 and CRYAA. The protein is Alpha-crystallin A chain (CRYAA) of Phocoena phocoena (Harbor porpoise).